The sequence spans 475 residues: Ribulose bisphosphate carboxylase large chain (475 aa).

Positions 123 and 173 each coordinate substrate. Lysine 175 (proton acceptor) is an active-site residue. Position 177 (lysine 177) interacts with substrate. Mg(2+)-binding residues include lysine 201, aspartate 203, and glutamate 204. Lysine 201 carries the post-translational modification N6-carboxylysine. The active-site Proton acceptor is histidine 294. Arginine 295, histidine 327, and serine 379 together coordinate substrate.

Belongs to the RuBisCO large chain family. Type I subfamily. In terms of assembly, heterohexadecamer of 8 large chains and 8 small chains. The cofactor is Mg(2+).

It is found in the plastid. Its subcellular location is the cyanelle. It carries out the reaction 2 (2R)-3-phosphoglycerate + 2 H(+) = D-ribulose 1,5-bisphosphate + CO2 + H2O. It catalyses the reaction D-ribulose 1,5-bisphosphate + O2 = 2-phosphoglycolate + (2R)-3-phosphoglycerate + 2 H(+). Its function is as follows. RuBisCO catalyzes two reactions: the carboxylation of D-ribulose 1,5-bisphosphate, the primary event in carbon dioxide fixation, as well as the oxidative fragmentation of the pentose substrate in the photorespiration process. Both reactions occur simultaneously and in competition at the same active site. The protein is Ribulose bisphosphate carboxylase large chain of Cyanophora paradoxa.